The following is a 214-amino-acid chain: dITP/XTP pyrophosphatase (214 aa).

Position 16–21 (threonine 16–lysine 21) interacts with substrate. Aspartate 48 and aspartate 77 together coordinate Mg(2+). The Proton acceptor role is filled by aspartate 77. Residues serine 78, phenylalanine 163–aspartate 166, lysine 186, and histidine 198–arginine 199 contribute to the substrate site.

It belongs to the HAM1 NTPase family. Homodimer. Mg(2+) serves as cofactor.

The catalysed reaction is XTP + H2O = XMP + diphosphate + H(+). The enzyme catalyses dITP + H2O = dIMP + diphosphate + H(+). It carries out the reaction ITP + H2O = IMP + diphosphate + H(+). In terms of biological role, pyrophosphatase that catalyzes the hydrolysis of nucleoside triphosphates to their monophosphate derivatives, with a high preference for the non-canonical purine nucleotides XTP (xanthosine triphosphate), dITP (deoxyinosine triphosphate) and ITP. Seems to function as a house-cleaning enzyme that removes non-canonical purine nucleotides from the nucleotide pool, thus preventing their incorporation into DNA/RNA and avoiding chromosomal lesions. This chain is dITP/XTP pyrophosphatase, found in Bradyrhizobium sp. (strain BTAi1 / ATCC BAA-1182).